The following is a 460-amino-acid chain: Crocetin glucosyltransferase 2 (460 aa).

The active-site Proton acceptor is the histidine 19. Histidine 19 provides a ligand contact to an anthocyanidin. Residues threonine 133, glutamine 333, histidine 348, tryptophan 351, asparagine 352, serine 353, glutamate 356, aspartate 372, and glutamine 373 each coordinate UDP-alpha-D-glucose.

The protein belongs to the UDP-glycosyltransferase family. Mainly expressed in fully developed stigmas.

The enzyme catalyses crocetin + UDP-alpha-D-glucose = beta-D-glucosyl crocetin + UDP. The catalysed reaction is beta-D-glucosyl crocetin + UDP-alpha-D-glucose = bis(beta-D-glucosyl) crocetin + UDP. It catalyses the reaction beta-D-gentiobiosyl crocetin + UDP-alpha-D-glucose = beta-D-gentiobiosyl beta-D-glucosyl crocetin + UDP. Functionally, crocetin glucosyltransferase involved in the synthesis of crocin, one of the apocarotenoids responsible for the color and bitter taste of saffron. The sequence is that of Crocetin glucosyltransferase 2 (GLT2) from Crocus sativus (Saffron).